Consider the following 126-residue polypeptide: MPTIQQLIRSERSKVQKKTKSPALKQCPQRRGVCTRVYTTTPKKPNSALRKVARVRLTSGFEVTAYIPGIGHNLQEHSVVLIRGGRVKDLPGVRYHIVRGTLDATGVKDRKQGRSKYGTKREKAKK.

The interval 1–28 is disordered; sequence MPTIQQLIRSERSKVQKKTKSPALKQCP. D89 carries the 3-methylthioaspartic acid modification. Residues 104 to 126 form a disordered region; sequence ATGVKDRKQGRSKYGTKREKAKK. Basic residues predominate over residues 113-126; the sequence is GRSKYGTKREKAKK.

The protein belongs to the universal ribosomal protein uS12 family. As to quaternary structure, part of the 30S ribosomal subunit. Contacts proteins S8 and S17. May interact with IF1 in the 30S initiation complex.

In terms of biological role, with S4 and S5 plays an important role in translational accuracy. Interacts with and stabilizes bases of the 16S rRNA that are involved in tRNA selection in the A site and with the mRNA backbone. Located at the interface of the 30S and 50S subunits, it traverses the body of the 30S subunit contacting proteins on the other side and probably holding the rRNA structure together. The combined cluster of proteins S8, S12 and S17 appears to hold together the shoulder and platform of the 30S subunit. The protein is Small ribosomal subunit protein uS12 of Synechocystis sp. (strain ATCC 27184 / PCC 6803 / Kazusa).